The sequence spans 480 residues: Aromatic-L-amino-acid decarboxylase (480 aa).

Lys292 is modified (N6-(pyridoxal phosphate)lysine).

The protein belongs to the group II decarboxylase family. It depends on pyridoxal 5'-phosphate as a cofactor.

The catalysed reaction is L-tryptophan + H(+) = tryptamine + CO2. It carries out the reaction L-phenylalanine + H(+) = 2-phenylethylamine + CO2. It catalyses the reaction 5-hydroxy-L-tryptophan + H(+) = serotonin + CO2. The enzyme catalyses L-dopa + H(+) = dopamine + CO2. Involved in bacillamide C biosynthesis. Catalyzes the decarboxylation of L-tryptophan to tryptamine. The tryptamine obtained is then probably incorporated into the bacillamide C peptide, which is derived from the amino acids alanine, cysteine and tryptophan through nonribosomal peptide synthetase (NRPS) biosynthesis strategy. L-tryptophan is the best substrate, but the enzyme displays broad substrate specificity for various aromatic amino acids in vitro and it can also catalyze the decarboxylation of L-phenylalanine, 5-hydroxy-L-tryptophan (L-HTP) and L-DOPA, with lower efficiency. Exhibits weak activity with L-tyrosine. This Bacillus atrophaeus protein is Aromatic-L-amino-acid decarboxylase.